Here is a 446-residue protein sequence, read N- to C-terminus: Exodeoxyribonuclease 7 large subunit (446 aa).

It belongs to the XseA family. In terms of assembly, heterooligomer composed of large and small subunits.

The protein resides in the cytoplasm. The catalysed reaction is Exonucleolytic cleavage in either 5'- to 3'- or 3'- to 5'-direction to yield nucleoside 5'-phosphates.. Functionally, bidirectionally degrades single-stranded DNA into large acid-insoluble oligonucleotides, which are then degraded further into small acid-soluble oligonucleotides. In Xanthomonas campestris pv. campestris (strain 8004), this protein is Exodeoxyribonuclease 7 large subunit.